The chain runs to 183 residues: UPF0397 protein EF_2154 (183 aa).

Transmembrane regions (helical) follow at residues 10-30 (IVAI…VVIP), 44-64 (FLAL…GLIG), 74-94 (GSAW…FGFA), 115-135 (IFQA…LDIL), and 147-167 (QGVF…TLLM).

It belongs to the UPF0397 family.

It localises to the cell membrane. This is UPF0397 protein EF_2154 from Enterococcus faecalis (strain ATCC 700802 / V583).